The sequence spans 832 residues: MPLEMEPKMSKLVFGCQRSSTSDDDSGCALEEYAWVPPGLRPEQIQLYFACLPEEKVPYVNSPGEKHRIKQLLYQLPPHDNEVRYCQSLSEEEKKELQVFSAQRKKEALGRGTIKLLSRAVMHAVCEQCGLQMNGGEVAVFASRAGPGVCWHPSCFVCFTCNELLVDLIYFYQDGKIHCGRHHAELLKPRCSACDEIIFADECTEAEGRHWHMKHFCCLECETVLGGQRYIMKDGRPFCCGCFESLYAEYCETCGEHIGVDHAQMTYDGQHWHATEACFSCAQCKASLLGCPFLPKQGQIYCSKTCSLGEDIHASDSSDSAFQSARSRDSRRSVRMGRSSRSADQCRQSLLLSPALNYKFPGLSGNADDTLSRKLDDVSLASRQGAGFANEEFWKARVEQEASEDPEEWAEHEDYMTQLLLKFGDKNLFQQQSSEVDPRASEHWIPDNMVTNKPEVKPNHQGLASKKYQSDMYWAQSQDGLGDSAYGSHPGPASSRRLQELDLDHGAAGYTHDQSQWYEDSLECLSDLKPEQSIRDSMDSLALSNITGASVDGESKPRPSLYSLQNFEEIEAEDCEKMSNMGTLNSSMLHRSAESLQSLNSGLCPEKILPEEKPAHLPVLRRSKSQSRPQQVKFSDDVIDNGSYDIEIRQPPMSERTRRRAYHFEERGSRPHHHRHRRSRKSRSDNALNLVTERKYSAKDRLRLYTPDNYEKFIQNKSARELQAYMQNANLYSQYAHATSDYALQNPGMNRFLGLCGEDDDSWCSSSTSSSDSEEEGYFLGQPIPQPRPQRFTYYTDDLSSPASALPTPQFTQRTTKSKKKKGHKGKNCIIS.

Residues 14-122 form the PET domain; that stretch reads FGCQRSSTSD…TIKLLSRAVM (109 aa). 3 consecutive LIM zinc-binding domains span residues 124 to 188, 189 to 249, and 250 to 313; these read AVCE…ELLK, PRCS…LYAE, and YCET…EDIH. The interval 314-342 is disordered; sequence ASDSSDSAFQSARSRDSRRSVRMGRSSRS. Phosphoserine occurs at positions 315, 592, and 595. 2 disordered regions span residues 663 to 688 and 765 to 832; these read HFEE…DNAL and SSST…CIIS. The span at 670-681 shows a compositional bias: basic residues; it reads RPHHHRHRRSRK. Ser684 is modified (phosphoserine). Over residues 798–815 the composition is skewed to polar residues; that stretch reads DLSSPASALPTPQFTQRT. Residues 816 to 832 show a composition bias toward basic residues; that stretch reads TKSKKKKGHKGKNCIIS. Residue Cys829 is modified to Cysteine methyl ester. Cys829 is lipidated: S-farnesyl cysteine. Residues 830–832 constitute a propeptide, removed in mature form; sequence IIS.

The protein belongs to the prickle / espinas / testin family. In terms of assembly, interacts with REST.

The protein localises to the nucleus membrane. Its subcellular location is the cytoplasm. The protein resides in the cytosol. Functionally, involved in the planar cell polarity pathway that controls convergent extension during gastrulation and neural tube closure. Convergent extension is a complex morphogenetic process during which cells elongate, move mediolaterally, and intercalate between neighboring cells, leading to convergence toward the mediolateral axis and extension along the anteroposterior axis. Necessary for nuclear localization of REST. May serve as nuclear receptor. The polypeptide is Prickle-like protein 1 (Prickle1) (Mus musculus (Mouse)).